Consider the following 66-residue polypeptide: Beta-defensin 13 (66 aa).

Positions 1 to 22 (MRIFSLIVAGLVLLIQLHPAKG) are cleaved as a signal peptide. Cystine bridges form between Cys30-Cys59, Cys37-Cys51, and Cys41-Cys60.

It belongs to the beta-defensin family.

It is found in the secreted. In terms of biological role, has antibacterial activity. This is Beta-defensin 13 (Defb13) from Rattus norvegicus (Rat).